The following is a 1243-amino-acid chain: MENCSAASTFLTDSLELELGTEWCKPPYFSCAVDNRGGGKHFSGESYLCSGALKRLILNLDPLPTNFEEDTLEIFGIQWVTETALVNSSRELFHLFRQQLYNLETLLQSSCDFGKVSTLHCKADNIRQQCVLFLHYVKVFIFRYLKVQNAESHVPVHPYEALEAQLPSVLIDELHGLLLYIGHLSELPSVNIGAFVNQNQIKLFPPSWHLLHLHLDIHWLVLEILYMLGEKLKQVVYGHQFMNLASDNLTNISLFEEHCETLLCDLISLSLNRYDKVRSSESLMSDQCPCLCIKELWVLLIHLLDHRSKWFVSESFWNWLNKLLKTLLEKSSDRRRSSMPVIQSRDPLGFSWWIITHVASFYKFDRHGVPDEMRKVESNWNFVEELLKKSISVQGVILEEQLRMYLHCCLTLCDFWEPNIAIVTILWEYYSKNLNSSFSISWLPFKGLANTMKSPLSMLEMVKTCCCDKQDQELYKSSSSYTIFLCILAKVVKKAMKSNGPHPWKQVKGRIYSKFHQKRMEELTEVGLQNFFSLFLLLAAVAEVEDVASHVLDLLNFLKPAFVTSQRALIWKGHMAFLLMYAQKNLDIGVLAEKFSCAFREKAKEFLVSKNEEMVQRQTIWTLLSIYIDGVQEVFETSYCLYPSHEKLLNDGFSMLLRACRESELRTVLSFLQAVLARIRSMHQQLCQELQRDNVDLFVQSSLSAKERHLAAVASALWRHFFSFLKSQRMSQVVPFSQLADAAADFTLLAMDMPSTAPSDFQPQPVISIIQLFGWDDIICPQVVARYLSHVLQNSTLCEALSHSGYVSFQALTVRSWIRCVLQMYIKNLSGPDDLLIDKNLEEAVEKEYMKQLVKLTRLLFNLSEVKSIFSKAQVEYLSISEDPKKALVRFFEAVGVTYGNVQTLSDKSAMVTKSLEYLGEVLKYIKPYLGKKVFSAGLQLTYGMMGILVKSWAQIFATSKAQKLLFRIIDCLLLPHAVLQQEKELPAPMLSAIQKSLPLYLQGMCIVCCQSQNPNAYLNQLLGNVIEQYIGRFLPASPYVSDLGQHPVLLALRNTATIPPISSLKKCIVQVIRKSYLEYKGSSPPPRLASILAFILQLFKETNTDIYEVELLLPGILKCLVLVSEPQVKRLATENLQYMVKACQVGSEEEPSSQLTSVFRQFIQDYGMRYYYQVYSILETVATLDQQVVIHLISTLTQSLKDSEQKWGLGRNIAQREAYSKLLSHLGQMGQDEMQRLENDNT.

The protein belongs to the MMS22 family. MMS22L subfamily. Component of the MMS22L-TONSL complex, a complex at least composed of MMS22L and TONSL/NFKBIL2. Interacts with RAD51; interaction is direct. In terms of processing, degraded by the ubiquitin-proteasome system upon replication stress.

It localises to the nucleus. It is found in the chromosome. Its function is as follows. Component of the MMS22L-TONSL complex, a complex that promotes homologous recombination-mediated repair of double-strand breaks (DSBs) at stalled or collapsed replication forks. The MMS22L-TONSL complex is required to maintain genome integrity during DNA replication. It mediates the assembly of RAD51 filaments on single-stranded DNA (ssDNA): the MMS22L-TONSL complex is recruited to DSBs following histone replacement by histone chaperones and eviction of the replication protein A complex (RPA/RP-A) from DSBs. Following recruitment to DSBs, the TONSL-MMS22L complex promotes recruitment of RAD51 filaments and subsequent homologous recombination. Within the complex, MMS22L acts by binding ssDNA. In Homo sapiens (Human), this protein is Protein MMS22-like.